Here is a 1004-residue protein sequence, read N- to C-terminus: 2-oxoglutarate dehydrogenase E1 component (1004 aa).

The protein belongs to the alpha-ketoglutarate dehydrogenase family. Homodimer. Part of the 2-oxoglutarate dehydrogenase (OGDH) complex composed of E1 (2-oxoglutarate dehydrogenase), E2 (dihydrolipoamide succinyltransferase) and E3 (dihydrolipoamide dehydrogenase); the complex contains multiple copies of the three enzymatic components (E1, E2 and E3). Thiamine diphosphate is required as a cofactor.

The enzyme catalyses N(6)-[(R)-lipoyl]-L-lysyl-[protein] + 2-oxoglutarate + H(+) = N(6)-[(R)-S(8)-succinyldihydrolipoyl]-L-lysyl-[protein] + CO2. E1 component of the 2-oxoglutarate dehydrogenase (OGDH) complex which catalyzes the decarboxylation of 2-oxoglutarate, the first step in the conversion of 2-oxoglutarate to succinyl-CoA and CO(2). This is 2-oxoglutarate dehydrogenase E1 component from Brucella canis (strain ATCC 23365 / NCTC 10854 / RM-666).